We begin with the raw amino-acid sequence, 383 residues long: Acetylornithine deacetylase (383 aa).

His80 is a binding site for Zn(2+). Asp82 is an active-site residue. Zn(2+) is bound at residue Asp112. Residue Glu144 is part of the active site. Zn(2+) contacts are provided by Glu145, Glu169, and His355.

The protein belongs to the peptidase M20A family. ArgE subfamily. As to quaternary structure, homodimer. Zn(2+) serves as cofactor. Requires Co(2+) as cofactor. It depends on glutathione as a cofactor.

It is found in the cytoplasm. It carries out the reaction N(2)-acetyl-L-ornithine + H2O = L-ornithine + acetate. It participates in amino-acid biosynthesis; L-arginine biosynthesis; L-ornithine from N(2)-acetyl-L-ornithine (linear): step 1/1. Its function is as follows. Catalyzes the hydrolysis of the amide bond of N(2)-acetylated L-amino acids. Cleaves the acetyl group from N-acetyl-L-ornithine to form L-ornithine, an intermediate in L-arginine biosynthesis pathway, and a branchpoint in the synthesis of polyamines. This Klebsiella pneumoniae (strain 342) protein is Acetylornithine deacetylase.